The primary structure comprises 278 residues: Phosphonates import ATP-binding protein PhnC 1 (278 aa).

One can recognise an ABC transporter domain in the interval Ile-5–Gly-253. Gly-37 to Ser-44 lines the ATP pocket.

Belongs to the ABC transporter superfamily. Phosphonates importer (TC 3.A.1.9.1) family. The complex is composed of two ATP-binding proteins (PhnC), two transmembrane proteins (PhnE) and a solute-binding protein (PhnD).

Its subcellular location is the cell inner membrane. The enzyme catalyses phosphonate(out) + ATP + H2O = phosphonate(in) + ADP + phosphate + H(+). In terms of biological role, part of the ABC transporter complex PhnCDE involved in phosphonates import. Responsible for energy coupling to the transport system. The polypeptide is Phosphonates import ATP-binding protein PhnC 1 (Pseudomonas aeruginosa (strain UCBPP-PA14)).